A 214-amino-acid polypeptide reads, in one-letter code: Reticulon-3-A (214 aa).

The disordered stretch occupies residues 1 to 21; sequence MAETSGPQSSHISSSSVGEKG. Residues 26–214 form the Reticulon domain; it reads VRDLLYWRDV…LPGALKKKSE (189 aa). 2 helical membrane-spanning segments follow: residues 46 to 66 and 155 to 175; these read MVLLLSLAAFSIISVISYLVL and VFNGITLLILGVLLTFTAPIV.

As to quaternary structure, homodimer. As to expression, expressed in the animal hemisphere at the four-cell stage. During gastrulation, expression becomes restricted to the prospective neuroectoderm. At the early tail bud stage, expressed in the head structure. At the tadpole stage, expressed in head and neural tissues including the otic vesicle and optic nerve.

The protein localises to the endoplasmic reticulum membrane. It is found in the golgi apparatus membrane. In terms of biological role, may be involved in membrane trafficking in the early secretory pathway. The sequence is that of Reticulon-3-A (rtn3-a) from Xenopus laevis (African clawed frog).